A 110-amino-acid chain; its full sequence is Ribonuclease P protein component 4 (110 aa).

Cysteine 65, cysteine 68, cysteine 94, and cysteine 97 together coordinate Zn(2+).

This sequence belongs to the eukaryotic/archaeal RNase P protein component 4 family. Consists of a catalytic RNA component and at least 4-5 protein subunits. It depends on Zn(2+) as a cofactor.

The protein localises to the cytoplasm. The catalysed reaction is Endonucleolytic cleavage of RNA, removing 5'-extranucleotides from tRNA precursor.. Its function is as follows. Part of ribonuclease P, a protein complex that generates mature tRNA molecules by cleaving their 5'-ends. The chain is Ribonuclease P protein component 4 from Methanococcus maripaludis (strain C6 / ATCC BAA-1332).